Reading from the N-terminus, the 122-residue chain is Large ribosomal subunit protein uL14 (122 aa).

The protein belongs to the universal ribosomal protein uL14 family. In terms of assembly, part of the 50S ribosomal subunit. Forms a cluster with proteins L3 and L19. In the 70S ribosome, L14 and L19 interact and together make contacts with the 16S rRNA in bridges B5 and B8.

Its function is as follows. Binds to 23S rRNA. Forms part of two intersubunit bridges in the 70S ribosome. The polypeptide is Large ribosomal subunit protein uL14 (Campylobacter fetus subsp. fetus (strain 82-40)).